The sequence spans 530 residues: Trigger factor (530 aa).

Residues 162-243 (DDLVTIDLAG…VTKVCEQELP (82 aa)) enclose the PPIase FKBP-type domain. The tract at residues 432-530 (NALELDRIQP…KTAAKDDKSK (99 aa)) is disordered. Basic and acidic residues-rich tracts occupy residues 459–478 (SAEK…EKAP) and 501–512 (KVVDAKSDDKPA).

The protein belongs to the FKBP-type PPIase family. Tig subfamily.

Its subcellular location is the cytoplasm. It carries out the reaction [protein]-peptidylproline (omega=180) = [protein]-peptidylproline (omega=0). Its function is as follows. Involved in protein export. Acts as a chaperone by maintaining the newly synthesized protein in an open conformation. Functions as a peptidyl-prolyl cis-trans isomerase. In Cutibacterium acnes (strain DSM 16379 / KPA171202) (Propionibacterium acnes), this protein is Trigger factor.